The sequence spans 361 residues: tRNA-specific 2-thiouridylase MnmA (361 aa).

ATP is bound by residues 8–15 (GMSGGVDS) and methionine 34. An interaction with target base in tRNA region spans residues 94 to 96 (NPD). The active-site Nucleophile is the cysteine 99. Cysteine 99 and cysteine 195 form a disulfide bridge. Glycine 123 serves as a coordination point for ATP. The tract at residues 145 to 147 (KDQ) is interaction with tRNA. The Cysteine persulfide intermediate role is filled by cysteine 195. The interval 307-308 (RY) is interaction with tRNA.

Belongs to the MnmA/TRMU family.

The protein resides in the cytoplasm. The catalysed reaction is S-sulfanyl-L-cysteinyl-[protein] + uridine(34) in tRNA + AH2 + ATP = 2-thiouridine(34) in tRNA + L-cysteinyl-[protein] + A + AMP + diphosphate + H(+). Catalyzes the 2-thiolation of uridine at the wobble position (U34) of tRNA, leading to the formation of s(2)U34. In Legionella pneumophila (strain Paris), this protein is tRNA-specific 2-thiouridylase MnmA.